We begin with the raw amino-acid sequence, 506 residues long: Zinc finger and SCAN domain containing protein 4C (506 aa).

Positions 1–24 are disordered; the sequence is MASQQAPAKDLQTNNLEFTPTDSS. Positions 37–119 constitute an SCAN box domain; it reads SAQLNFSPSN…RFMESLTDEC (83 aa). C2H2-type zinc fingers lie at residues 395-417, 424-446, 452-474, and 480-503; these read YKCE…QRTH, LLCV…EIIH, FKCS…EMIH, and YVCS…RNYH.

In terms of tissue distribution, embryonic stem (ES) cell-specific. Expressed in only 5% of ES cells at a given time, but nearly all ES cells express it at least once during 9 passages.

The protein localises to the nucleus. Its subcellular location is the chromosome. The protein resides in the telomere. Embryonic stem (ES) cell-specific transcription factor required to regulate ES cell pluripotency. Binds telomeres and plays a key role in genomic stability in ES cells by regulating telomere elongation. Acts as an activator of spontaneous telomere sister chromatid exchange (T-SCE) and telomere elongation in undifferentiated ES cells. In Mus musculus (Mouse), this protein is Zinc finger and SCAN domain containing protein 4C (Zscan4c).